The sequence spans 569 residues: Proline--tRNA ligase (569 aa).

It belongs to the class-II aminoacyl-tRNA synthetase family. ProS type 1 subfamily. Homodimer.

It localises to the cytoplasm. It catalyses the reaction tRNA(Pro) + L-proline + ATP = L-prolyl-tRNA(Pro) + AMP + diphosphate. In terms of biological role, catalyzes the attachment of proline to tRNA(Pro) in a two-step reaction: proline is first activated by ATP to form Pro-AMP and then transferred to the acceptor end of tRNA(Pro). As ProRS can inadvertently accommodate and process non-cognate amino acids such as alanine and cysteine, to avoid such errors it has two additional distinct editing activities against alanine. One activity is designated as 'pretransfer' editing and involves the tRNA(Pro)-independent hydrolysis of activated Ala-AMP. The other activity is designated 'posttransfer' editing and involves deacylation of mischarged Ala-tRNA(Pro). The misacylated Cys-tRNA(Pro) is not edited by ProRS. The chain is Proline--tRNA ligase from Colwellia psychrerythraea (strain 34H / ATCC BAA-681) (Vibrio psychroerythus).